Here is a 539-residue protein sequence, read N- to C-terminus: Glucans biosynthesis protein D (539 aa).

Residues 1-29 (MNRRNLLKASMALAAYGSVSASGLYAARA) constitute a signal peptide (tat-type signal).

This sequence belongs to the OpgD/OpgG family. Post-translationally, predicted to be exported by the Tat system. The position of the signal peptide cleavage has not been experimentally proven.

It localises to the periplasm. It functions in the pathway glycan metabolism; osmoregulated periplasmic glucan (OPG) biosynthesis. In terms of biological role, probably involved in the control of the structural glucose backbone of osmoregulated periplasmic glucans (OPGs). The sequence is that of Glucans biosynthesis protein D from Pseudomonas savastanoi pv. phaseolicola (strain 1448A / Race 6) (Pseudomonas syringae pv. phaseolicola (strain 1448A / Race 6)).